The sequence spans 237 residues: NAD-dependent protein deacetylase (237 aa).

The Deacetylase sirtuin-type domain occupies 1 to 237 (MFTTSLRQAQ…LVETNRALQK (237 aa)). Ala18, Thr22, Phe29, Arg30, Gln95, Asp98, and His113 together coordinate NAD(+). Residue Phe29 participates in nicotinamide binding. Position 98 (Asp98) interacts with nicotinamide. The Proton acceptor role is filled by His113. Zn(2+) is bound by residues Cys121, Cys124, Cys140, and Cys142. NAD(+) is bound by residues Ser180, Ser181, Asn205, and Ile224.

The protein belongs to the sirtuin family. Class U subfamily. Zn(2+) is required as a cofactor.

Its subcellular location is the cytoplasm. The enzyme catalyses N(6)-acetyl-L-lysyl-[protein] + NAD(+) + H2O = 2''-O-acetyl-ADP-D-ribose + nicotinamide + L-lysyl-[protein]. In terms of biological role, NAD-dependent protein deacetylase which modulates the activities of several enzymes which are inactive in their acetylated form. This is NAD-dependent protein deacetylase from Shouchella clausii (strain KSM-K16) (Alkalihalobacillus clausii).